The chain runs to 72 residues: Teretoxin Tsu11.2 (72 aa).

An N-terminal signal peptide occupies residues 1–21; sequence MMAKATMAFCFLLMLTTVMLP. A propeptide spanning residues 22–30 is cleaved from the precursor; the sequence is TEGKTIAGR.

It belongs to the teretoxin H (TH) superfamily. In terms of processing, contains 4 disulfide bonds. In terms of tissue distribution, expressed by the venom duct.

It is found in the secreted. This Terebra subulata (Chocolate spotted auger) protein is Teretoxin Tsu11.2.